The chain runs to 63 residues: Large ribosomal subunit protein uL30 (63 aa).

This sequence belongs to the universal ribosomal protein uL30 family. In terms of assembly, part of the 50S ribosomal subunit.

The chain is Large ribosomal subunit protein uL30 from Xylella fastidiosa (strain 9a5c).